Consider the following 668-residue polypeptide: Patellin-5 (668 aa).

The disordered stretch occupies residues 1 to 263; the sequence is MSQDSATTTP…STTTSTVASR (263 aa). Basic and acidic residues-rich tracts occupy residues 55–68, 82–100, 107–125, and 132–150; these read ESNH…EKVT, AAED…ETAK, TAED…ETVK, and VAED…ETVK. Residues 170–186 are compositionally biased toward polar residues; the sequence is TPETETSEADTSLLVTS. The segment covering 218–231 has biased composition (acidic residues); the sequence is VEDWTEPELPDEAV. The segment covering 244–254 has biased composition (pro residues); it reads PEPQTPPPPPS. Ser-290 carries the phosphoserine modification. One can recognise a CRAL-TRIO domain in the interval 377-552; the sequence is DENLGDDLDK…QYGGLSVDNC (176 aa). Positions 556 to 662 constitute a GOLD domain; the sequence is SDFTHDDIAT…KKMLIYRFKV (107 aa).

This sequence belongs to the patellin family.

Its subcellular location is the membrane. It localises to the cytoplasm. In terms of biological role, carrier protein that may be involved in membrane-trafficking events associated with cell plate formation during cytokinesis. Binds to some hydrophobic molecules such as phosphoinositides and promotes their transfer between the different cellular sites. This is Patellin-5 (PATL5) from Arabidopsis thaliana (Mouse-ear cress).